We begin with the raw amino-acid sequence, 225 residues long: tRNA 2'-phosphotransferase 1 (225 aa).

Residues Met1–Arg21 form a disordered region.

Belongs to the KptA/TPT1 family.

The enzyme catalyses 2'-phospho-[ligated tRNA] + NAD(+) = mature tRNA + ADP-alpha-D-ribose 1'',2''-cyclic phosphate + nicotinamide. Functionally, catalyzes the last step of tRNA splicing, the transfer of the splice junction 2'-phosphate from ligated tRNA to NAD to produce ADP-ribose 1''-2'' cyclic phosphate. The protein is tRNA 2'-phosphotransferase 1 (trpt1) of Danio rerio (Zebrafish).